A 185-amino-acid chain; its full sequence is Chromobox protein homolog 1 (185 aa).

Residues Lys-9 and Lys-33 each participate in a glycyl lysine isopeptide (Lys-Gly) (interchain with G-Cter in SUMO2) cross-link. The 59-residue stretch at 21–79 folds into the Chromo 1 domain; it reads YVVEKVLDRRVVKGKVEYLLKWKGFSDEDNTWEPEENLDCPDLIAEFLQSQKTAHETDK. Positions 63–124 are disordered; sequence LIAEFLQSQK…RGLEPERIIG (62 aa). The span at 73–89 shows a compositional bias: basic and acidic residues; it reads TAHETDKSEGGKRKADS. 2 positions are modified to phosphoserine: Ser-89 and Ser-91. Basic and acidic residues predominate over residues 96-121; that stretch reads EESKPKKKKEESEKPRGFARGLEPER. Residues Lys-99 and Lys-150 each participate in a glycyl lysine isopeptide (Lys-Gly) (interchain with G-Cter in SUMO2) cross-link. One can recognise a Chromo 2; shadow subtype domain in the interval 117–175; that stretch reads LEPERIIGATDSSGELMFLMKWKNSDEADLVPAKEANVKCPQVVISFYEERLTWHSYPS. A Phosphoserine modification is found at Ser-175.

In terms of assembly, homodimer. Interacts directly with CHAF1A, EMSY, LBR, TIF1/TIF1A and TRIM28/TIF1B PXVXL motif via the chromoshadow domain. Interacts directly with histone H3 methylated at 'Lys-9' via the chromo domain. Interacts with SUV39H1 and SETDB1, KMT5B and KMT5C. Interacts with PRDM6. Interacts with POGZ. Interacts with CHAMP1. Interacts with INCENP. Interacts with SGO1; the CBX1 homodimer binds to one molecule of SGO1. Interacts with LRIF1 (via PxVxL motif). Interacts with HDGFL2. Interacts with CHD3. Interacts with CHD4. Not phosphorylated. In terms of processing, ubiquitinated. As to expression, expressed in all adult and embryonic tissues.

The protein localises to the nucleus. Functionally, component of heterochromatin. Recognizes and binds histone H3 tails methylated at 'Lys-9', leading to epigenetic repression. Interaction with lamin B receptor (LBR) can contribute to the association of the heterochromatin with the inner nuclear membrane. The polypeptide is Chromobox protein homolog 1 (CBX1) (Homo sapiens (Human)).